Consider the following 275-residue polypeptide: MIKLLFTYICTYTYKLYALYHMDYACVCMYKYKGIVTLQVCLFYIKLRVFLSNFTFSSSILALKNPNNSLIKIMAILPENSSNLDLTISVPGFSSSPLSDEGSGGGRDQLRLDMNRLPSSEDGDDEEFSHDDGSAPPRKKLRLTREQSRLLEDSFRQNHTLNPKQKEVLAKHLMLRPRQIEVWFQNRRARSKLKQTEMECEYLKRWFGSLTEENHRLHREVEELRAMKVGPTTVNSASSLTMCPRCERVTPAASPSRAVVPVPAKKTFPPQERDR.

The interval 95–143 is disordered; sequence SSPLSDEGSGGGRDQLRLDMNRLPSSEDGDDEEFSHDDGSAPPRKKLRL. The segment at residues 136-195 is a DNA-binding region (homeobox); that stretch reads PPRKKLRLTREQSRLLEDSFRQNHTLNPKQKEVLAKHLMLRPRQIEVWFQNRRARSKLKQ. Positions 203–224 are leucine-zipper; the sequence is LKRWFGSLTEENHRLHREVEEL. The tract at residues 252-275 is disordered; sequence AASPSRAVVPVPAKKTFPPQERDR.

Belongs to the HD-ZIP homeobox family. Class II subfamily.

It is found in the nucleus. In terms of biological role, probable transcription factor. The protein is Homeobox-leucine zipper protein ATHB-17 (ATHB-17) of Arabidopsis thaliana (Mouse-ear cress).